We begin with the raw amino-acid sequence, 246 residues long: Osmotin-like protein OSML13 (246 aa).

A signal peptide spans 1–21 (MAYLRSSFVFFLLAFVTYTYA). 8 cysteine pairs are disulfide-bonded: C30–C225, C72–C82, C87–C93, C141–C213, C146–C196, C154–C164, C168–C177, and C178–C183.

It belongs to the thaumatin family.

This is Osmotin-like protein OSML13 from Solanum commersonii (Commerson's wild potato).